The chain runs to 192 residues: MASKGPSASASTENSSAGGPSGSSNGTGESGGQDSTFECNICLDTAKDAVISLCGHLFCWPCLHQWLETRPNRQVCPVCKAGISRDKVIPLYGRGSTGQQDPREKTPPRPQGQRPEPENRGGFQGFGFGDGGFQMSFGIGAFPFGIFATAFNINDGRPPPAVPGTPQYVDEQFLSRLFLFVALVIMFWLLIA.

A compositionally biased stretch (polar residues) spans 1–14; sequence MASKGPSASASTEN. The interval 1 to 30 is disordered; the sequence is MASKGPSASASTENSSAGGPSGSSNGTGES. The Cytoplasmic segment spans residues 1–130; sequence MASKGPSASA…GGFQGFGFGD (130 aa). Residues 15–27 show a composition bias toward low complexity; sequence SSAGGPSGSSNGT. The required for ubiquitin ligase activity and protection against ER stress-induced cell death stretch occupies residues 29-80; that stretch reads ESGGQDSTFECNICLDTAKDAVISLCGHLFCWPCLHQWLETRPNRQVCPVCK. The RING-type zinc finger occupies 39-80; that stretch reads CNICLDTAKDAVISLCGHLFCWPCLHQWLETRPNRQVCPVCK. Positions 90-123 are disordered; the sequence is PLYGRGSTGQQDPREKTPPRPQGQRPEPENRGGF. A helical membrane pass occupies residues 131 to 151; it reads GGFQMSFGIGAFPFGIFATAF. Residues 152–171 are Mitochondrial intermembrane-facing; that stretch reads NINDGRPPPAVPGTPQYVDE. The helical transmembrane segment at 172-192 threads the bilayer; that stretch reads QFLSRLFLFVALVIMFWLLIA.

Interacts with ATG5 and BNIP1.

It localises to the mitochondrion outer membrane. It is found in the endoplasmic reticulum membrane. It carries out the reaction S-ubiquitinyl-[E2 ubiquitin-conjugating enzyme]-L-cysteine + [acceptor protein]-L-lysine = [E2 ubiquitin-conjugating enzyme]-L-cysteine + N(6)-ubiquitinyl-[acceptor protein]-L-lysine.. The protein operates within protein modification; protein ubiquitination. In terms of biological role, E3 ubiquitin-protein ligase that regulates selective mitochondrial autophagy by mediating 'Lys-63'-linked polyubiquitination of BNIP1. Acts in the endoplasmic reticulum (ER)-associated degradation (ERAD) pathway, which targets misfolded proteins that accumulate in the endoplasmic reticulum (ER) for ubiquitination and subsequent proteasome-mediated degradation. Protects cells from ER stress-induced apoptosis. Responsible for the cotranslational ubiquitination and degradation of CFTR in the ERAD pathway. Also acts as a regulator of the innate antiviral response by catalyzing 'Lys-27'-linked polyubiquitination of CGAS, thereby promoting CGAS cyclic GMP-AMP synthase activity. Preferentially associates with the E2 enzymes UBE2J1 and UBE2J2. The polypeptide is E3 ubiquitin-protein ligase RNF185 (Rnf185) (Rattus norvegicus (Rat)).